We begin with the raw amino-acid sequence, 314 residues long: MSFPAPKPKAPELPQKLQHKLECNQGAVRAVRFNVDGNYCMTCGSDKSLKLWNPHKGSLLKTYSGHGYEVLDTAGSCDNSQLCSCSSDKTVILWDVAQGQVVRKFRGHAGKVNCVQFNEEATVIISGSIDSSIRCWDCRSRRPDAIQIMDEAKDGISSVKVSAHEILAGSVDGNLRRYDLRKGEMCADYLGSPITCVSFSQDSQCLLASSLDSTLRLLDKDTGELLGEYTGHQNLSYKLDSCLSEKDTHVLSCSEDGTVCFWDLVEGSLVLKLPVGKAVVQSLSFHPTECCLLTASEGGVQVWRGASYEEEGGS.

WD repeat units lie at residues 23-62 (CNQG…LLKT), 65-104 (GHGY…VVRK), 107-146 (GHAG…PDAI), 151-188 (EAKD…MCAD), 189-228 (YLGS…LLGE), 231-272 (GHQN…LVLK), and 275-313 (VGKA…EEGG).

It belongs to the WD repeat MORG1 family.

The protein resides in the cytoplasm. Molecular scaffold protein for various multimeric protein complexes. Acts as a module in the assembly of a multicomponent scaffold for the ERK pathway, linking ERK responses to specific agonists. Also involved in response to hypoxia by acting as a negative regulator of HIF1A/HIF-1-alpha. The protein is WD repeat domain-containing protein 83 (wdr83) of Xenopus laevis (African clawed frog).